Reading from the N-terminus, the 242-residue chain is Probable 2-phosphosulfolactate phosphatase (242 aa).

It belongs to the ComB family. It depends on Mg(2+) as a cofactor.

It carries out the reaction (2R)-O-phospho-3-sulfolactate + H2O = (2R)-3-sulfolactate + phosphate. This Prochlorococcus marinus (strain NATL2A) protein is Probable 2-phosphosulfolactate phosphatase.